Consider the following 1073-residue polypeptide: Transmembrane protein 132E (1073 aa).

Positions 1–33 are cleaved as a signal peptide; it reads MGHFVVQGDLPWILCSLRLVIMIIAGKVSPTSS. Topologically, residues 34-899 are extracellular; it reads DALFSVPVPS…MTDLEIGMYA (866 aa). An N-linked (GlcNAc...) asparagine glycan is attached at asparagine 102. The disordered stretch occupies residues 246-270; it reads DPDSNDECGESYPRRGGPSRGESLS. Residues asparagine 324, asparagine 396, and asparagine 746 are each glycosylated (N-linked (GlcNAc...) asparagine). A helical membrane pass occupies residues 900–920; sequence LLGVFCLAILVFLINCIVFVL. Residues 921–1073 are Cytoplasmic-facing; that stretch reads KYRHKRIPPE…DYMRRIKEIA (153 aa). Over residues 952–970 the composition is skewed to polar residues; it reads TQSDLSPQTVESPSNTLEG. The tract at residues 952–1024 is disordered; that stretch reads TQSDLSPQTV…PTSKRKRVKF (73 aa). The span at 982-994 shows a compositional bias: low complexity; the sequence is SGSSQTSVQSQVH.

This sequence belongs to the TMEM132 family.

Its subcellular location is the membrane. Required for normal inner ear hair cell function and hearing. This chain is Transmembrane protein 132E (tmem132e), found in Danio rerio (Zebrafish).